The primary structure comprises 423 residues: ER-bound oxygenase mpaB' (423 aa).

Topologically, residues 1-22 are lumenal; sequence MSLSLPPALSELARALPYSRTQ. A helical membrane pass occupies residues 23 to 41; that stretch reads WLPILVGFLIGYPLLIKAL. Over 42–423 the chain is Cytoplasmic; that stretch reads RYKRLGEMKK…ISRTGKCPFH (382 aa).

This sequence belongs to the mpaB oxygenase family.

The protein localises to the endoplasmic reticulum membrane. It catalyses the reaction 4-farnesyl-3,5-dihydroxy-6-methylphthalide + AH2 + 2 O2 = (4E,8E)-10-(4,6-dihydroxy-7-methyl-3-oxo-1,3-dihydro-2-benzofuran-5-yl)-4,8-dimethyldeca-4,8-dienoate + acetone + A + H2O + H(+). Its pathway is secondary metabolite biosynthesis; terpenoid biosynthesis. Functionally, ER-bound oxygenase; part of the gene cluster that mediates the biosynthesis of mycophenolic acid (MPA), the first isolated antibiotic natural product in the world obtained from a culture of Penicillium brevicompactum in 1893. MpaB' catalyzes the oxidative cleavage the C19-C20 double bond in farnesyl-DHMP (FDHMP) to yield FDHMP-3C via a mycophenolic aldehyde intermediate. The first step of the pathway is the synthesis of 5-methylorsellinic acid (5MOA) by the cytosolic polyketide synthase mpaC. 5MOA is then converted to the phthalide compound 5,7-dihydroxy-4,6-dimethylphthalide (DHMP) by the endoplasmic reticulum-bound cytochrome P450 monooxygenase mpaDE. MpaDE first catalyzes hydroxylation of 5-MOA to 4,6-dihydroxy-2-(hydroxymethyl)-3-methylbenzoic acid (DHMB). MpaDE then acts as a lactone synthase that catalyzes the ring closure to convert DHMB into DHMP. The next step is the prenylation of DHMP by the Golgi apparatus-associated prenyltransferase mpaA to yield farnesyl-DHMP (FDHMP). The ER-bound oxygenase mpaB then mediates the oxidative cleavage the C19-C20 double bond in FDHMP to yield FDHMP-3C via a mycophenolic aldehyde intermediate. The O-methyltransferase mpaG catalyzes the methylation of FDHMP-3C to yield MFDHMP-3C. After the cytosolic methylation of FDHMP-3C, MFDHMP-3C enters into peroxisomes probably via free diffusion due to its low molecular weight. Upon a peroxisomal CoA ligation reaction, catalyzed by a beta-oxidation component enzyme acyl-CoA ligase ACL891, MFDHMP-3C-CoA would then be restricted to peroxisomes for the following beta-oxidation pathway steps. The peroxisomal beta-oxidation machinery than converts MFDHMP-3C-CoA into MPA_CoA, via a beta-oxidation chain-shortening process. Finally mpaH acts as a peroxisomal acyl-CoA hydrolase with high substrate specificity toward MPA-CoA to release the final product MPA. The protein is ER-bound oxygenase mpaB' of Penicillium brevicompactum.